Reading from the N-terminus, the 254-residue chain is Proteasome subunit alpha (254 aa).

Residues Glu234 to Ser254 form a disordered region.

It belongs to the peptidase T1A family. As to quaternary structure, the 20S proteasome core is composed of 14 alpha and 14 beta subunits that assemble into four stacked heptameric rings, resulting in a barrel-shaped structure. The two inner rings, each composed of seven catalytic beta subunits, are sandwiched by two outer rings, each composed of seven alpha subunits. The catalytic chamber with the active sites is on the inside of the barrel. Has a gated structure, the ends of the cylinder being occluded by the N-termini of the alpha-subunits. Is capped by the proteasome-associated ATPase, ARC.

It localises to the cytoplasm. Its pathway is protein degradation; proteasomal Pup-dependent pathway. With respect to regulation, the formation of the proteasomal ATPase ARC-20S proteasome complex, likely via the docking of the C-termini of ARC into the intersubunit pockets in the alpha-rings, may trigger opening of the gate for substrate entry. Interconversion between the open-gate and close-gate conformations leads to a dynamic regulation of the 20S proteasome proteolysis activity. Functionally, component of the proteasome core, a large protease complex with broad specificity involved in protein degradation. The sequence is that of Proteasome subunit alpha from Rhodococcus erythropolis (strain PR4 / NBRC 100887).